Consider the following 396-residue polypeptide: Elongation factor Tu (396 aa).

A tr-type G domain is found at 11–205 (KPHVNIGTIG…TVDEYIPTPE (195 aa)). A G1 region spans residues 20 to 27 (GHVDHGKT). Residue 20–27 (GHVDHGKT) participates in GTP binding. Mg(2+) is bound at residue Thr-27. The tract at residues 61–65 (GITIN) is G2. The segment at 82 to 85 (DAPG) is G3. Residues 82 to 86 (DAPGH) and 137 to 140 (NKCD) each bind GTP. The tract at residues 137 to 140 (NKCD) is G4. The segment at 175–177 (SAL) is G5.

This sequence belongs to the TRAFAC class translation factor GTPase superfamily. Classic translation factor GTPase family. EF-Tu/EF-1A subfamily. As to quaternary structure, monomer.

It localises to the cytoplasm. It catalyses the reaction GTP + H2O = GDP + phosphate + H(+). GTP hydrolase that promotes the GTP-dependent binding of aminoacyl-tRNA to the A-site of ribosomes during protein biosynthesis. This chain is Elongation factor Tu, found in Lactobacillus helveticus (strain DPC 4571).